A 244-amino-acid polypeptide reads, in one-letter code: Gamma-gliadin (244 aa).

Residues 18–64 are disordered; the sequence is QQPFLQQPQQPSPQPQQVVQIISPATPTTIPSAGKPTSAPFPQQQQQ. The segment covering 35 to 48 has biased composition (polar residues); sequence VVQIISPATPTTIP.

It belongs to the gliadin/glutenin family.

Functionally, gliadin is the major seed storage protein in wheat. This is Gamma-gliadin from Triticum aestivum (Wheat).